The primary structure comprises 161 residues: Urease accessory protein UreE (161 aa).

The protein belongs to the UreE family.

It is found in the cytoplasm. Its function is as follows. Involved in urease metallocenter assembly. Binds nickel. Probably functions as a nickel donor during metallocenter assembly. The sequence is that of Urease accessory protein UreE from Pseudarthrobacter chlorophenolicus (strain ATCC 700700 / DSM 12829 / CIP 107037 / JCM 12360 / KCTC 9906 / NCIMB 13794 / A6) (Arthrobacter chlorophenolicus).